Consider the following 340-residue polypeptide: Sideroflexin-5 (340 aa).

4 helical membrane passes run 103-123, 163-183, 254-274, and 287-307; these read IFMP…VVGL, FIQG…GLNV, LTRV…MSML, and LLPV…PLAI.

The protein belongs to the sideroflexin family. In terms of tissue distribution, primarily expressed in the brain.

It is found in the mitochondrion inner membrane. It catalyses the reaction citrate(in) = citrate(out). Mitochondrial amino-acid transporter. Transports citrate. Does not act as a serine transporter: not able to mediate transport of serine into mitochondria. In brown adipose tissue, plays a role in the regulation of UCP1-dependent thermogenesis probably by supporting mitochondrial glycerol-3-phosphate utilization. The chain is Sideroflexin-5 from Homo sapiens (Human).